The sequence spans 604 residues: Glutamyl-tRNA(Gln) amidotransferase subunit B, mitochondrial (604 aa).

The N-terminal 48 residues, 1 to 48 (MIRQCLSRRGAYSRYRLAARGVELAEPFHHQSSRPQGRRNWSSSPRCS), are a transit peptide targeting the mitochondrion. Residues 28-57 (FHHQSSRPQGRRNWSSSPRCSLDIRTDTPR) form a disordered region. The segment covering 33–46 (SRPQGRRNWSSSPR) has biased composition (polar residues).

It belongs to the GatB/GatE family. GatB subfamily. As to quaternary structure, subunit of the heterotrimeric GatCAB amidotransferase (AdT) complex, composed of A, B and C subunits.

The protein localises to the mitochondrion. The catalysed reaction is L-glutamyl-tRNA(Gln) + L-glutamine + ATP + H2O = L-glutaminyl-tRNA(Gln) + L-glutamate + ADP + phosphate + H(+). Allows the formation of correctly charged Gln-tRNA(Gln) through the transamidation of misacylated Glu-tRNA(Gln) in the mitochondria. The reaction takes place in the presence of glutamine and ATP through an activated gamma-phospho-Glu-tRNA(Gln). This is Glutamyl-tRNA(Gln) amidotransferase subunit B, mitochondrial from Blastomyces gilchristii (strain SLH14081) (Blastomyces dermatitidis).